A 522-amino-acid chain; its full sequence is 2-isopropylmalate synthase (522 aa).

Residues 5 to 267 enclose the Pyruvate carboxyltransferase domain; that stretch reads VIIFDTTLRD…ETGINAKEIH (263 aa). Positions 14, 202, 204, and 238 each coordinate Mn(2+). Residues 392-522 are regulatory domain; the sequence is QLQQLVVQSD…MQKNRELGGV (131 aa).

Belongs to the alpha-IPM synthase/homocitrate synthase family. LeuA type 1 subfamily. As to quaternary structure, homodimer. Mn(2+) is required as a cofactor.

It is found in the cytoplasm. It catalyses the reaction 3-methyl-2-oxobutanoate + acetyl-CoA + H2O = (2S)-2-isopropylmalate + CoA + H(+). It participates in amino-acid biosynthesis; L-leucine biosynthesis; L-leucine from 3-methyl-2-oxobutanoate: step 1/4. In terms of biological role, catalyzes the condensation of the acetyl group of acetyl-CoA with 3-methyl-2-oxobutanoate (2-ketoisovalerate) to form 3-carboxy-3-hydroxy-4-methylpentanoate (2-isopropylmalate). The chain is 2-isopropylmalate synthase from Shewanella baltica (strain OS195).